A 376-amino-acid polypeptide reads, in one-letter code: Lipid-A-disaccharide synthase (376 aa).

This sequence belongs to the LpxB family.

It carries out the reaction a lipid X + a UDP-2-N,3-O-bis[(3R)-3-hydroxyacyl]-alpha-D-glucosamine = a lipid A disaccharide + UDP + H(+). The protein operates within bacterial outer membrane biogenesis; LPS lipid A biosynthesis. In terms of biological role, condensation of UDP-2,3-diacylglucosamine and 2,3-diacylglucosamine-1-phosphate to form lipid A disaccharide, a precursor of lipid A, a phosphorylated glycolipid that anchors the lipopolysaccharide to the outer membrane of the cell. The chain is Lipid-A-disaccharide synthase from Coxiella burnetii (strain CbuK_Q154) (Coxiella burnetii (strain Q154)).